The following is a 365-amino-acid chain: Probable receptor-like protein kinase At2g47060 (365 aa).

Positions 18-48 are disordered; it reads DYGGRHNQAKHFPPGNDARHHQASETAQKGP. The Protein kinase domain occupies 73–353; that stretch reads FGSNSLIGEG…IVVKALQPLL (281 aa). ATP-binding positions include 79 to 87 and K101; that span reads IGEGSYGRV. Y145 carries the post-translational modification Phosphotyrosine. The active-site Proton acceptor is the D203. Residues S207 and S237 each carry the phosphoserine modification. A phosphothreonine mark is found at T238 and T243. A Phosphotyrosine modification is found at Y251.

It belongs to the protein kinase superfamily. Ser/Thr protein kinase family.

The enzyme catalyses L-seryl-[protein] + ATP = O-phospho-L-seryl-[protein] + ADP + H(+). It carries out the reaction L-threonyl-[protein] + ATP = O-phospho-L-threonyl-[protein] + ADP + H(+). The chain is Probable receptor-like protein kinase At2g47060 from Arabidopsis thaliana (Mouse-ear cress).